A 923-amino-acid chain; its full sequence is Neuropilin-1 (923 aa).

The first 21 residues, 1-21 (MERGLPLLCAVLALVLAPAGA), serve as a signal peptide directing secretion. At 22–856 (FRNDKCGDTI…PGNVLKTLDP (835 aa)) the chain is on the extracellular side. Disulfide bonds link Cys27–Cys54, Cys82–Cys104, and Cys147–Cys173. CUB domains follow at residues 27–141 (CGDT…YEIF) and 147–265 (CSQN…YSVL). Asn150 carries an N-linked (GlcNAc...) asparagine glycan. Positions 195, 209, and 250 each coordinate Ca(2+). An intrachain disulfide couples Cys206 to Cys228. N-linked (GlcNAc...) asparagine glycosylation is found at Asn261, Asn300, and Asn522. Intrachain disulfides connect Cys275–Cys424 and Cys431–Cys583. F5/8 type C domains are found at residues 275 to 424 (CMEA…VYGC) and 431 to 583 (CSGM…LLGC). O-linked (Xyl...) (chondroitin sulfate) serine; alternate glycosylation occurs at Ser612. Ser612 carries an O-linked (Xyl...) (heparan sulfate) serine; alternate glycan. Positions 645 to 811 (TYGFNCEFGW…NHISQEDCAK (167 aa)) constitute an MAM domain. The tract at residues 820-845 (PEIKIDETGSTPGYEGEGEGDKNISR) is disordered. O-linked (Xyl...) (chondroitin sulfate) serine glycosylation is present at Ser829. Asn842 carries N-linked (GlcNAc...) asparagine glycosylation. The helical transmembrane segment at 857–879 (ILITIIAMSALGVLLGAVCGVVL) threads the bilayer. Topologically, residues 880–923 (YCACWHNGMSERNLSALENYNFELVDGVKLKKDKLNTQSTYSEA) are cytoplasmic. Residue Ser894 is modified to Phosphoserine.

Belongs to the neuropilin family. Homodimer, and heterodimer with NRP2. Interacts with FER. Interacts with PLXNB1. Interacts with VEGFA. Interacts with ABCB8/MITOSUR in mitochondria. In terms of assembly, (Microbial infection) Interacts with SARS coronavirus-2/SARS-CoV-2 spike protein S1 (via the CendR motif RRAR). The expression of isoforms 1 and 2 does not seem to overlap. Expressed in olfactory epithelium (at protein level). Expressed in fibroblasts (at protein level). Expressed by the blood vessels of different tissues. In the developing embryo it is found predominantly in the nervous system. In adult tissues, it is highly expressed in heart and placenta; moderately in lung, liver, skeletal muscle, kidney and pancreas; and low in adult brain. Expressed in the central nervous system, including olfactory related regions such as the olfactory tubercles and paraolfactory gyri. In terms of tissue distribution, the expression of isoforms 1 and 2 does not seem to overlap. Found in liver hepatocytes, kidney distal and proximal tubules.

It localises to the secreted. It is found in the mitochondrion membrane. The protein localises to the cell membrane. The protein resides in the cytoplasm. In terms of biological role, cell-surface receptor involved in the development of the cardiovascular system, in angiogenesis, in the formation of certain neuronal circuits and in organogenesis outside the nervous system. Mediates the chemorepulsant activity of semaphorins. Recognizes a C-end rule (CendR) motif R/KXXR/K on its ligands which causes cellular internalization and vascular leakage. It binds to semaphorin 3A, the PLGF-2 isoform of PGF, the VEGF165 isoform of VEGFA and VEGFB. Coexpression with KDR results in increased VEGF165 binding to KDR as well as increased chemotaxis. Regulates VEGF-induced angiogenesis. Binding to VEGFA initiates a signaling pathway needed for motor neuron axon guidance and cell body migration, including for the caudal migration of facial motor neurons from rhombomere 4 to rhombomere 6 during embryonic development. Regulates mitochondrial iron transport via interaction with ABCB8/MITOSUR. Its function is as follows. (Microbial infection) Acts as a host factor for human coronavirus SARS-CoV-2 infection. Recognizes and binds to CendR motif RRAR on SARS-CoV-2 spike protein S1 which enhances SARS-CoV-2 infection. Binds VEGF-165 and may inhibit its binding to cells. May induce apoptosis by sequestering VEGF-165. May bind as well various members of the semaphorin family. Its expression has an averse effect on blood vessel number and integrity. The protein is Neuropilin-1 of Homo sapiens (Human).